A 357-amino-acid chain; its full sequence is Chorismate synthase (357 aa).

Arg47 serves as a coordination point for NADP(+). FMN-binding positions include Arg123–Ser125, Gly281, Lys296–Ser300, and Arg324.

The protein belongs to the chorismate synthase family. Homotetramer. FMNH2 serves as cofactor.

The catalysed reaction is 5-O-(1-carboxyvinyl)-3-phosphoshikimate = chorismate + phosphate. It participates in metabolic intermediate biosynthesis; chorismate biosynthesis; chorismate from D-erythrose 4-phosphate and phosphoenolpyruvate: step 7/7. Catalyzes the anti-1,4-elimination of the C-3 phosphate and the C-6 proR hydrogen from 5-enolpyruvylshikimate-3-phosphate (EPSP) to yield chorismate, which is the branch point compound that serves as the starting substrate for the three terminal pathways of aromatic amino acid biosynthesis. This reaction introduces a second double bond into the aromatic ring system. This chain is Chorismate synthase, found in Chlamydia trachomatis serovar L2 (strain ATCC VR-902B / DSM 19102 / 434/Bu).